Here is a 579-residue protein sequence, read N- to C-terminus: Transcription factor MTB2 (579 aa).

The segment at 373–439 is disordered; it reads GGMQIDFTNS…PLNHVEAERQ (67 aa). A compositionally biased stretch (low complexity) spans 382–392; sequence SRPVVSPVPTV. Composition is skewed to basic and acidic residues over residues 393-415 and 425-439; these read ESEH…DERR and NGRE…AERQ. A basic motif; degenerate region spans residues 428 to 441; that stretch reads EEPLNHVEAERQRR. In terms of domain architecture, bHLH spans 428 to 477; the sequence is EEPLNHVEAERQRREKLNQRFYALRAVVPNISKMDKASLLGDAIAHITDM. Residues 442–477 form a helix-loop-helix motif region; the sequence is EKLNQRFYALRAVVPNISKMDKASLLGDAIAHITDM.

Its subcellular location is the nucleus. Functionally, transcription factor that negatively regulates jasmonate (JA) signaling. Negatively regulates JA-dependent response to wounding, JA-induced expression of defense genes, JA-dependent responses against herbivorous insects, and JA-dependent resistance against Botrytis cinerea infection. Plays a positive role in resistance against the bacterial pathogen Pseudomonas syringae pv tomato DC3000. This chain is Transcription factor MTB2, found in Solanum lycopersicum (Tomato).